A 100-amino-acid polypeptide reads, in one-letter code: Large ribosomal subunit protein uL23 (100 aa).

It belongs to the universal ribosomal protein uL23 family. In terms of assembly, part of the 50S ribosomal subunit. Contacts protein L29, and trigger factor when it is bound to the ribosome.

In terms of biological role, one of the early assembly proteins it binds 23S rRNA. One of the proteins that surrounds the polypeptide exit tunnel on the outside of the ribosome. Forms the main docking site for trigger factor binding to the ribosome. The sequence is that of Large ribosomal subunit protein uL23 from Mycolicibacterium vanbaalenii (strain DSM 7251 / JCM 13017 / BCRC 16820 / KCTC 9966 / NRRL B-24157 / PYR-1) (Mycobacterium vanbaalenii).